Consider the following 80-residue polypeptide: Clavanin-D (80 aa).

The N-terminal stretch at 1-19 (MKTTILILLILGLGINAKS) is a signal peptide. A propeptide spanning residues 20 to 29 (LEERKSEEEK) is cleaved from the precursor. The residue at position 52 (Phe-52) is a Phenylalanine amide. Positions 54 to 80 (DDQQDNGKFYGHYAEDNGKHWYDTGDQ) are excised as a propeptide.

As to expression, hemocytes and pharyngeal tissues.

It localises to the secreted. In terms of biological role, has antimicrobial activity against E.coli, L.monocytogenes and C.albicans. This Styela clava (Sea squirt) protein is Clavanin-D.